The sequence spans 307 residues: Transaldolase (307 aa).

The active-site Schiff-base intermediate with substrate is K125.

Belongs to the transaldolase family. Type 1 subfamily.

The protein localises to the cytoplasm. The enzyme catalyses D-sedoheptulose 7-phosphate + D-glyceraldehyde 3-phosphate = D-erythrose 4-phosphate + beta-D-fructose 6-phosphate. Its pathway is carbohydrate degradation; pentose phosphate pathway; D-glyceraldehyde 3-phosphate and beta-D-fructose 6-phosphate from D-ribose 5-phosphate and D-xylulose 5-phosphate (non-oxidative stage): step 2/3. Functionally, transaldolase is important for the balance of metabolites in the pentose-phosphate pathway. The protein is Transaldolase of Pseudomonas aeruginosa (strain ATCC 15692 / DSM 22644 / CIP 104116 / JCM 14847 / LMG 12228 / 1C / PRS 101 / PAO1).